The chain runs to 993 residues: Desmoglein-3 (993 aa).

Residues 1 to 23 form the signal peptide; that stretch reads MTWLLFRTSGALAILMVLILVHG. Residues 24–48 constitute a propeptide that is removed on maturation; the sequence is ELRIETKGQHGEDETAIQGRRRYKR. 4 Cadherin domains span residues 48 to 156, 157 to 266, 267 to 386, and 383 to 494; these read REWV…APVF, SQSI…FPMF, KESQ…HPAS, and HPAS…CPTV. Residues 49–617 are Extracellular-facing; it reads EWVKFAKPCR…GKRPSGRLGS (569 aa). Residues Asn-109 and Asn-179 are each glycosylated (N-linked (GlcNAc...) asparagine). 2 N-linked (GlcNAc...) asparagine glycosylation sites follow: Asn-458 and Asn-544. Residues 618-638 traverse the membrane as a helical segment; sequence AAIGLLLLGLLLLLLAPLLLL. Over 639 to 993 the chain is Cytoplasmic; sequence TCDYGVGPIG…CTEDPCSRLI (355 aa). The required for interaction with CTNND1 and localization at cell-cell junctions stretch occupies residues 641-713; sequence DYGVGPIGGV…NTYAGGTVVE (73 aa). Desmoglein repeat repeat units follow at residues 903–929 and 930–960; these read LSAS…MVTE and TYSA…ERVI.

As to quaternary structure, homodimer. Part of a complex that contains DSG3, PKP1, YAP1 and YWHAG; the complex is required for localization of DSG3 and YAP1 to the cell membrane in keratinocytes. Interacts with PKP2. Interacts with CTNND1; the interaction facilitates DSG3 localization and retention at cell-cell junctions. Interacts with CDH1; the interaction is required for CDH1 localization to developing adherens junctions. Interacts with RAC1; the interaction is required for DSG3 translocation to cell-cell junctions, organization of cortical F-actin bundles and actin anchoring at cell-cell junctions. Interacts with DSC3; the interaction may limit the interaction of DSC3 with p38MAPK family members and therefore repress p38MAPK signaling activation.

The protein resides in the cell membrane. Its subcellular location is the cell junction. It localises to the desmosome. The protein localises to the cytoplasm. It is found in the tight junction. A component of desmosome cell-cell junctions which are required for positive regulation of cellular adhesion. Required for adherens and desmosome junction assembly in response to mechanical force in keratinocytes. Required for desmosome-mediated cell-cell adhesion of cells surrounding the telogen hair club and the basal layer of the outer root sheath epithelium, consequently is essential for the anchoring of telogen hairs in the hair follicle. Required for the maintenance of the epithelial barrier via promoting desmosome-mediated intercellular attachment of suprabasal epithelium to basal cells. May play a role in the protein stability of the desmosome plaque components DSP, JUP, PKP1, PKP2 and PKP3. Required for YAP1 localization at the plasma membrane in keratinocytes in response to mechanical strain, via the formation of an interaction complex composed of DSG3, PKP1 and YWHAG. May also be involved in the positive regulation of YAP1 target gene transcription and as a result cell proliferation. Positively regulates cellular contractility and cell junction formation via organization of cortical F-actin bundles and anchoring of actin to tight junctions, in conjunction with RAC1. The cytoplasmic pool of DSG3 is required for the localization of CDH1 and CTNNB1 at developing adherens junctions, potentially via modulation of SRC activity. Inhibits keratinocyte migration via suppression of p38MAPK signaling, may therefore play a role in moderating wound healing. This Canis lupus familiaris (Dog) protein is Desmoglein-3 (DSG3).